The sequence spans 447 residues: Argininosuccinate synthase (447 aa).

Residues 17–25 (AFSGGLDTS) and Ala-43 each bind ATP. Tyr-99 is an L-citrulline binding site. The ATP site is built by Gly-129 and Thr-131. L-aspartate contacts are provided by Thr-131, Asn-135, and Asp-136. Asn-135 provides a ligand contact to L-citrulline. Asp-136 contacts ATP. Residues Arg-139 and Ser-192 each contribute to the L-citrulline site. Asp-194 lines the ATP pocket. Thr-201, Glu-203, and Glu-280 together coordinate L-citrulline.

The protein belongs to the argininosuccinate synthase family. Type 2 subfamily. As to quaternary structure, homotetramer.

The protein resides in the cytoplasm. The catalysed reaction is L-citrulline + L-aspartate + ATP = 2-(N(omega)-L-arginino)succinate + AMP + diphosphate + H(+). The protein operates within amino-acid biosynthesis; L-arginine biosynthesis; L-arginine from L-ornithine and carbamoyl phosphate: step 2/3. The protein is Argininosuccinate synthase of Klebsiella pneumoniae (strain 342).